A 543-amino-acid polypeptide reads, in one-letter code: Putative fatty acyl-CoA reductase CG8303 (543 aa).

A disordered region spans residues 1 to 29 (MAVITEHGGTTSSPPENNNSIGNGKHRVN). Polar residues predominate over residues 8–22 (GGTTSSPPENNNSIG). 3 consecutive transmembrane segments (helical) span residues 386 to 406 (LFFYLFHLLPAMVFIIPEKLF), 500 to 520 (VFNVLYYAGYVVIFAVLYFAL), and 522 to 542 (LTLGLQIGLTLAVLIWGFLVW).

Belongs to the fatty acyl-CoA reductase family.

The protein localises to the membrane. The catalysed reaction is a long-chain fatty acyl-CoA + 2 NADPH + 2 H(+) = a long-chain primary fatty alcohol + 2 NADP(+) + CoA. The enzyme catalyses hexadecanoyl-CoA + 2 NADPH + 2 H(+) = hexadecan-1-ol + 2 NADP(+) + CoA. It catalyses the reaction octadecanoyl-CoA + 2 NADPH + 2 H(+) = octadecan-1-ol + 2 NADP(+) + CoA. Its function is as follows. Catalyzes the reduction of C16 or C18 fatty acyl-CoA to fatty alcohols. This Drosophila melanogaster (Fruit fly) protein is Putative fatty acyl-CoA reductase CG8303.